A 231-amino-acid polypeptide reads, in one-letter code: MVLIKRHFLQKAAIKVMVDEYLAKQFYNAEYAGVEIVKTPIGTRVIIYAGRPPLIIGKGGKTIKQLAQVLEKFFGLENPQITVTAAENPELNARVMAFRLAIALEKGYHFRRAAFITIRRIMSSGAVGAEVIVSGKLTSERAKYEKLKEGTVYKSGQQLEKIIDRAIGIAMLKPGVYGVEVVITKPTRSIDKIELKEKVEKTEQGGMVTVTNVSFIEENKSSGGVSNASGS.

One can recognise a KH type-2 domain in the interval 18–97; it reads VDEYLAKQFY…NPELNARVMA (80 aa).

It belongs to the universal ribosomal protein uS3 family. In terms of assembly, part of the 30S ribosomal subunit.

Binds the lower part of the 30S subunit head. The chain is Small ribosomal subunit protein uS3 from Sulfolobus acidocaldarius (strain ATCC 33909 / DSM 639 / JCM 8929 / NBRC 15157 / NCIMB 11770).